Here is a 230-residue protein sequence, read N- to C-terminus: MTSKIIVALDYEKEAEALALVDQIDPSLCRLKVGKEMFTTLGINFVKQLHQRNFDVFLDLKYHDIPNTVARAVRSAADLGVWMVDLHASGGLRMMEEAKKILEPYGKDAPLLIAVTVLTSMEDLDLLQIGINASPMEQVLRLAHLTQRAGLDGVVCSPQEVEILRNTCGKEFKLVTPGIRPIGTDFGDQRRVMTPTAAIRAGSDYLVIGRPITQADNPAEVLRSINVSIG.

Residues Asp-10, Lys-32, 59 to 68 (DLKYHDIPNT), Thr-119, Arg-180, Gln-189, Gly-209, and Arg-210 each bind substrate. Lys-61 acts as the Proton donor in catalysis.

This sequence belongs to the OMP decarboxylase family. Type 1 subfamily. As to quaternary structure, homodimer.

The catalysed reaction is orotidine 5'-phosphate + H(+) = UMP + CO2. It participates in pyrimidine metabolism; UMP biosynthesis via de novo pathway; UMP from orotate: step 2/2. Its function is as follows. Catalyzes the decarboxylation of orotidine 5'-monophosphate (OMP) to uridine 5'-monophosphate (UMP). The polypeptide is Orotidine 5'-phosphate decarboxylase (Haemophilus influenzae (strain 86-028NP)).